A 4699-amino-acid chain; its full sequence is PKS-NRPS hybrid synthetase cheA (4699 aa).

The span at 1-21 shows a compositional bias: acidic residues; the sequence is MSDNDDEWNGFSDDNGEDDGP. Disordered regions lie at residues 1-38 and 136-165; these read MSDNDDEWNGFSDDNGEDDGPPEPGRPSQIDGQPWDVP and DGWRFHSHPDPQHSVHNHGPSLHPSAHTQH. Residues 136 to 148 show a composition bias toward basic and acidic residues; sequence DGWRFHSHPDPQH. Residues 172–520 form an N-terminal acylcarrier protein transacylase domain (SAT) region; the sequence is SLDTIAELSN…VQQNVEEMAK (349 aa). The interval 625–836 is disordered; sequence PLPSVEDNVA…AGAPGARVTR (212 aa). Residues 674–688 are compositionally biased toward low complexity; the sequence is TQGSQGSQGRRTPGS. The segment covering 724–737 has biased composition (basic residues); that stretch reads PKRRGRPPGSKNKK. In terms of domain architecture, Ketosynthase family 3 (KS3) spans 737–1138; sequence KKDQAPAPAE…GANAHAILEA (402 aa). Residues 764 to 777 are compositionally biased toward low complexity; sequence ASAPRRGLRAAPAA. Over residues 802–816 the composition is skewed to polar residues; that stretch reads ATASTPRAQSDQGTG. Residues cysteine 873, histidine 1012, and histidine 1058 each act as for beta-ketoacyl synthase activity in the active site. Positions 1250–1573 are malonyl-CoA:ACP transacylase (MAT) domain; it reads VFTGQGAQWP…VGTLLRQRDA (324 aa). Residues 1644-1777 are N-terminal hotdog fold; sequence NELLGTRIMD…ANLIISLGEP (134 aa). Residues 1644 to 1947 form the PKS/mFAS DH domain; the sequence is NELLGTRIMD…TKPLVPPTPS (304 aa). Residues 1645–1941 form a dehydratase (DH) domain region; it reads ELLGTRIMDN…QLQGLHTKPL (297 aa). The active-site Proton acceptor; for dehydratase activity is the histidine 1676. A C-terminal hotdog fold region spans residues 1794–1947; that stretch reads MLDVPAERFY…TKPLVPPTPS (154 aa). The active-site Proton donor; for dehydratase activity is aspartate 1854. The interval 2050 to 2241 is methyltransferase (MT) domain; it reads LNRFYIEALG…RNTGFSGADE (192 aa). The ketoreductase (KR) domain stretch occupies residues 2794–2967; it reads TYWLVGLTGG…PAAAVNIGAV (174 aa). Residues 3076–3153 form the Carrier 1 domain; that stretch reads DASEILEDAY…ALFELVKERA (78 aa). An O-(pantetheine 4'-phosphoryl)serine modification is found at serine 3113. Residues 3164 to 3265 are disordered; it reads EQPDQVKSPR…PVASSPDAGL (102 aa). Composition is skewed to polar residues over residues 3200-3209 and 3218-3233; these read SLDQGSSWDS and GHDSTILSSTAPSSPI. The condensation (C) domain stretch occupies residues 3268–3696; it reads SVPLSFSQAR…PISRISKPPL (429 aa). Positions 3730-4113 are adenylation (A) domain; the sequence is IQAHPDKLAL…GGLILEGRID (384 aa). Residues 4236-4316 enclose the Carrier 2 domain; sequence EGLPAMQHLI…TMAALVASGS (81 aa). The thiolation and peptide carrier (T) domain stretch occupies residues 4241–4313; that stretch reads MQHLIKQLWE…TLETMAALVA (73 aa). Serine 4276 is modified (O-(pantetheine 4'-phosphoryl)serine). The interval 4367–4598 is reductase (R) domain; that stretch reads LTGSTGFLGR…ISVHTVAAAI (232 aa).

The protein in the C-terminal section; belongs to the NRP synthetase family.

Its pathway is secondary metabolite biosynthesis. PKS-NRPS hybrid synthetase; part of the gene cluster that mediates the biosynthesis of chaetoglobosin A which has a unique inhibitory activity against actin polymerization in mammalian cells. Chaetoglobosin A and its intermediates are involved in the morphological differentiation of C.globosum. The first step of the pathway is the synthesis of prochaetoglobosin I via condensation of one acetyl-CoA, 8 malonyl-CoA, and a L-tryptophan molecule by the PKS-NRPS hybrid synthetase cheA, followed by reduction of backbone double bond to install desired geometry by the enoyl reductase cheB. Further multiple oxidation steps performed by the cytochrome P450 monooxygenases cheE and cheG, as well as by the FAD-linked oxidoreductase cheF, lead to the formation of chaetoglobosin A. Depending on the order of action of these reductases, distinct intermediates can be identified. Within the pathway, the cytochrome P450 monooxygenase cheE catalyzes a stereospecific epoxidation on prochaetoglobosin I, cytoglobosin D, and chaetoglobosin J intermediates. The FAD-linked oxidoreductase cheF performs dehydrogenation of the C-20 hydroxyl groups in the 20-dihyrochaetoglobosin A and cytoglobosin D intermediates. Finally, the cytochrome P450 monooxygenase cheG can catalyze the stereospecific dihydroxylation of prochaetoglobosin I and prochaetoglobosin IV at C-19 and C-20, respectively. The Diels-Alderase cheD may play a role in the post-PKS-NRPS biosynthetic steps catalyzing Diels-Alder cyclization. This Chaetomium globosum (strain ATCC 6205 / CBS 148.51 / DSM 1962 / NBRC 6347 / NRRL 1970) (Soil fungus) protein is PKS-NRPS hybrid synthetase cheA.